A 178-amino-acid polypeptide reads, in one-letter code: Large ribosomal subunit protein uL6 (178 aa).

The protein belongs to the universal ribosomal protein uL6 family. Part of the 50S ribosomal subunit.

This protein binds to the 23S rRNA, and is important in its secondary structure. It is located near the subunit interface in the base of the L7/L12 stalk, and near the tRNA binding site of the peptidyltransferase center. The polypeptide is Large ribosomal subunit protein uL6 (Lactiplantibacillus plantarum (strain ATCC BAA-793 / NCIMB 8826 / WCFS1) (Lactobacillus plantarum)).